The chain runs to 508 residues: Maturase K (508 aa).

This sequence belongs to the intron maturase 2 family. MatK subfamily.

Its subcellular location is the plastid. It is found in the chloroplast. Functionally, usually encoded in the trnK tRNA gene intron. Probably assists in splicing its own and other chloroplast group II introns. This is Maturase K from Manilkara zapota (Sapodilla plum).